A 58-amino-acid chain; its full sequence is UPF0434 protein Sfri_2386 (58 aa).

The protein belongs to the UPF0434 family.

The sequence is that of UPF0434 protein Sfri_2386 from Shewanella frigidimarina (strain NCIMB 400).